The primary structure comprises 67 residues: DNA-directed RNA polymerase subunit omega (67 aa).

The protein belongs to the RNA polymerase subunit omega family. The RNAP catalytic core consists of 2 alpha, 1 beta, 1 beta' and 1 omega subunit. When a sigma factor is associated with the core the holoenzyme is formed, which can initiate transcription.

It carries out the reaction RNA(n) + a ribonucleoside 5'-triphosphate = RNA(n+1) + diphosphate. Functionally, promotes RNA polymerase assembly. Latches the N- and C-terminal regions of the beta' subunit thereby facilitating its interaction with the beta and alpha subunits. This is DNA-directed RNA polymerase subunit omega from Polaromonas naphthalenivorans (strain CJ2).